Reading from the N-terminus, the 704-residue chain is Elongation factor G (704 aa).

In terms of domain architecture, tr-type G spans 8–291; that stretch reads DRVRNIGIMA…AVIDYLASPV (284 aa). Residues 17-24, 90-94, and 144-147 contribute to the GTP site; these read AHIDAGKT, DTPGH, and NKMD.

The protein belongs to the TRAFAC class translation factor GTPase superfamily. Classic translation factor GTPase family. EF-G/EF-2 subfamily.

It is found in the cytoplasm. Catalyzes the GTP-dependent ribosomal translocation step during translation elongation. During this step, the ribosome changes from the pre-translocational (PRE) to the post-translocational (POST) state as the newly formed A-site-bound peptidyl-tRNA and P-site-bound deacylated tRNA move to the P and E sites, respectively. Catalyzes the coordinated movement of the two tRNA molecules, the mRNA and conformational changes in the ribosome. The chain is Elongation factor G from Chlorobaculum tepidum (strain ATCC 49652 / DSM 12025 / NBRC 103806 / TLS) (Chlorobium tepidum).